A 756-amino-acid chain; its full sequence is Catalase-peroxidase (756 aa).

The segment at residues 91 to 244 is a cross-link (tryptophyl-tyrosyl-methioninium (Trp-Tyr) (with M-270)); that stretch reads WHSAGTYRTG…LAAVQMGLIY (154 aa). The active-site Proton acceptor is the H92. The tract at residues 198–230 is disordered; that stretch reads AQKKMQQPGDGTLVAEPENHANEESRTASGERN. The segment covering 214 to 223 has biased composition (basic and acidic residues); it reads PENHANEESR. Positions 244–270 form a cross-link, tryptophyl-tyrosyl-methioninium (Tyr-Met) (with W-91); that stretch reads YVNPEGPEGVPDPVASAKDIRETFGRM. H285 contributes to the heme b binding site. A disordered region spans residues 371–390; that stretch reads KNGAGAGKIPDAHDPSKRHA.

The protein belongs to the peroxidase family. Peroxidase/catalase subfamily. In terms of assembly, homodimer or homotetramer. The cofactor is heme b. Formation of the three residue Trp-Tyr-Met cross-link is important for the catalase, but not the peroxidase activity of the enzyme.

It catalyses the reaction H2O2 + AH2 = A + 2 H2O. The catalysed reaction is 2 H2O2 = O2 + 2 H2O. Bifunctional enzyme with both catalase and broad-spectrum peroxidase activity. The sequence is that of Catalase-peroxidase from Pseudomonas savastanoi pv. phaseolicola (strain 1448A / Race 6) (Pseudomonas syringae pv. phaseolicola (strain 1448A / Race 6)).